A 204-amino-acid polypeptide reads, in one-letter code: MFITLEGGEGVGKTTQQALLAERLQREGYACVSTREPGGTALGEALRELLLHGDPLTPLAELLLYAADRAEHVNKVIAPALAVGQVVICDRFTDSTLAYQGYGRGLNLEQIRQLNHLATGGLQPQLTLWLDLAPEVGLARSRLGDKLEQEHLEFHRRVYRGFQALAAAEPQRIVRIDAGGSPLEVAARIWSVVKPRLLAAVPRP.

7–14 (GGEGVGKT) contributes to the ATP binding site.

This sequence belongs to the thymidylate kinase family.

It catalyses the reaction dTMP + ATP = dTDP + ADP. Its function is as follows. Phosphorylation of dTMP to form dTDP in both de novo and salvage pathways of dTTP synthesis. The chain is Thymidylate kinase from Synechococcus sp. (strain JA-3-3Ab) (Cyanobacteria bacterium Yellowstone A-Prime).